The following is a 379-amino-acid chain: MAPNIRKSHPLLKIINNSLIDLPSPSNISAWWNFGSLLGICLITQILTGLLLAMHYTADTSLAFSSVAHTCRNVQYGWLIRNLHANGASFFFICIYLHIGRGFYYGSYLYKETWNTGVILLLTLMATAFVGYVLPWGQMSFWGATVITNLFSAIPYIGQTLVEWAWGGFSVDNPTLTRFFALHFLLPFLIAGITIIHLTFLHESGSNNPLGIVSHCDKIPFHPYFSLKDILGFTLMFIPLLILAFFSPNLLGDPENFTPANPLVTPPHIKPEWYFLFAYAILRSIPNKLGGVLALAASVLILFLIPFLHKSKQRSMTFRPLSQMLFWLLVANLLILTWIGSQPVEHPFIIIGQTASFTYFLILLILFPTIGALENKMLY.

4 helical membrane-spanning segments follow: residues 34–54 (FGSL…LLAM), 78–99 (WLIR…YLHI), 114–134 (WNTG…GYVL), and 179–199 (FFAL…IHLT). Residues His84 and His98 each coordinate heme b. Positions 183 and 197 each coordinate heme b. His202 lines the a ubiquinone pocket. Transmembrane regions (helical) follow at residues 227–247 (LKDI…AFFS), 289–309 (LGGV…PFLH), 321–341 (LSQM…WIGS), and 348–368 (FIII…ILFP).

It belongs to the cytochrome b family. As to quaternary structure, the cytochrome bc1 complex contains 11 subunits: 3 respiratory subunits (MT-CYB, CYC1 and UQCRFS1), 2 core proteins (UQCRC1 and UQCRC2) and 6 low-molecular weight proteins (UQCRH/QCR6, UQCRB/QCR7, UQCRQ/QCR8, UQCR10/QCR9, UQCR11/QCR10 and a cleavage product of UQCRFS1). This cytochrome bc1 complex then forms a dimer. It depends on heme b as a cofactor.

It localises to the mitochondrion inner membrane. Its function is as follows. Component of the ubiquinol-cytochrome c reductase complex (complex III or cytochrome b-c1 complex) that is part of the mitochondrial respiratory chain. The b-c1 complex mediates electron transfer from ubiquinol to cytochrome c. Contributes to the generation of a proton gradient across the mitochondrial membrane that is then used for ATP synthesis. This chain is Cytochrome b (MT-CYB), found in Dromaius novaehollandiae (Emu).